Consider the following 74-residue polypeptide: uncharacterized protein (74 aa).

The protein to U.parvum UU416.

This is an uncharacterized protein from Mycoplasma pneumoniae (strain ATCC 29342 / M129 / Subtype 1) (Mycoplasmoides pneumoniae).